Consider the following 531-residue polypeptide: MASFVDRVIVHATGGNGGHGCVSVKREKFKPLGGPDGGNGGDGGSVILRVDGQSTTLLGFHHAPHQKAPNGEPGKGDMRHGFKGQDLVLSVPDGTVVKDREGNVLADLLGEGSEYVLAAGGQGGRGNAALASPKRKAPGFALLGTPGEEQEVELELKSIADIALVGFPSAGKSSLIAAMSAARPKIADYPFTTLVPNLGVVQAGDTRFTVADVPGLIPGASEGKGLGLEFLRHVERCAALVHVIDCATLEPGRDPLTDLDALEEELAHYAQDIADEDPSSIPLTQRPRLVVLNKVDVPEARELADFVRVELEQRGYPVFEISTASHEGLRELSFAMAALVSEARAQEEQREQQRQTVPVLQPEPVRRRRGRDRREFVITREDRAEEPLYHVRGEKPERWVLQTDFNNDEAVGYLADRFAKLGIEDELFRIGAKPGNAVLIGPEENGVVFDWEPTMVGGAELLGGPRGSDLRLEETSRPTRREKREQFYDRMDAKSEARAELEQERRAGVWTESVDARDRRRTSETKETNEK.

Residues 2–159 (ASFVDRVIVH…QEVELELKSI (158 aa)) enclose the Obg domain. Residues 160 to 341 (ADIALVGFPS…LSFAMAALVS (182 aa)) form the OBG-type G domain. GTP is bound by residues 166–173 (GFPSAGKS), 191–195 (FTTLV), 212–215 (DVPG), 293–296 (NKVD), and 322–324 (STA). Mg(2+)-binding residues include Ser-173 and Thr-193. Positions 346–365 (QEEQREQQRQTVPVLQPEPV) are disordered. The OCT domain occupies 368–453 (RRGRDRREFV…ENGVVFDWEP (86 aa)). Residues 459–531 (AELLGGPRGS…TSETKETNEK (73 aa)) form a disordered region. Basic and acidic residues-rich tracts occupy residues 468-507 (SDLRLEETSRPTRREKREQFYDRMDAKSEARAELEQERRA) and 514-531 (VDARDRRRTSETKETNEK).

This sequence belongs to the TRAFAC class OBG-HflX-like GTPase superfamily. OBG GTPase family. Monomer. Mg(2+) is required as a cofactor.

Its subcellular location is the cytoplasm. Functionally, an essential GTPase which binds GTP, GDP and possibly (p)ppGpp with moderate affinity, with high nucleotide exchange rates and a fairly low GTP hydrolysis rate. Plays a role in control of the cell cycle, stress response, ribosome biogenesis and in those bacteria that undergo differentiation, in morphogenesis control. The polypeptide is GTPase Obg (Kocuria rhizophila (strain ATCC 9341 / DSM 348 / NBRC 103217 / DC2201)).